Reading from the N-terminus, the 112-residue chain is Ig kappa chain V-III region PC 7132 (112 aa).

The interval 1 to 23 is framework-1; that stretch reads DIVLTQSPASLAVSLGQRATISC. C23 and C92 are disulfide-bonded. The tract at residues 24-38 is complementarity-determining-1; that stretch reads RASESVDNYGISFMN. The segment at 39-53 is framework-2; sequence WFQQKPGQPPKLLIY. Residues 54-60 form a complementarity-determining-2 region; the sequence is AASNQGS. Residues 61 to 92 are framework-3; sequence GVPARFSGSGSGTDFSLNIHPMEEDDTAMYFC. Positions 93 to 102 are complementarity-determining-3; it reads QQSKEVPPYT. Residues 103–112 are framework-4; that stretch reads FGGGTKLEIK.

In Mus musculus (Mouse), this protein is Ig kappa chain V-III region PC 7132.